Consider the following 153-residue polypeptide: Pheromone-binding protein Gp-9 (153 aa).

An N-terminal signal peptide occupies residues 1-19 (MKTFVLHIFIFALVAFASA). 3 cysteine pairs are disulfide-bonded: cysteine 37/cysteine 77, cysteine 73/cysteine 129, and cysteine 118/cysteine 138.

This sequence belongs to the PBP/GOBP family. As to quaternary structure, homodimer.

It is found in the secreted. Colony queen number, a major feature of social organization, is associated with worker genotype for Gp-9. Colonies are headed by either a single reproductive queen (monogyne form) or multiple queens (polygyne form). Differences in worker Gp-9 genotypes between social forms may cause differences in workers' abilities to recognize queens and regulate their numbers. This chain is Pheromone-binding protein Gp-9, found in Solenopsis richteri (Black imported fire ant).